We begin with the raw amino-acid sequence, 182 residues long: Large ribosomal subunit protein bL25 (182 aa).

The protein belongs to the bacterial ribosomal protein bL25 family. CTC subfamily. As to quaternary structure, part of the 50S ribosomal subunit; part of the 5S rRNA/L5/L18/L25 subcomplex. Contacts the 5S rRNA. Binds to the 5S rRNA independently of L5 and L18.

Functionally, this is one of the proteins that binds to the 5S RNA in the ribosome where it forms part of the central protuberance. The sequence is that of Large ribosomal subunit protein bL25 from Borreliella burgdorferi (strain ATCC 35210 / DSM 4680 / CIP 102532 / B31) (Borrelia burgdorferi).